The sequence spans 468 residues: MTRHHSAPRNLPRAQLYAERAFATLERFLHVEAVSGAVLLAAAAIALVWANSAFAHSYHALWHAPLSFRLGSYEFAQPLHFWINDALMTLFFLAVGMEIRREIHEGALSNFRQAALPLAAALGGVVAPALIYLAFNGQAPRSAGWAVPTATDIAFAVGVLALLGRAIPGNVRIFLLALAIIDDIIAVLIIAFFYSGGLDYSGFAVAALGIAIVLGLQRIGIGTAYAYVLPGAIVWTGLLMTGAHPTLAGVVLGLMTPVVPRRMREQPLEMMSRATRELAGWYQAQPAAESGAPTLPLRQLRVAQREILPPVVRVQAALHPWVAYAIMPLFALANAGVSLDGVDLAAGGSHWVMAGVAGALIVGKPAGVIAMSWLLVRLGWCRLPPGVTWGGIVLIGLLAGVGFTMSIFIAMLAFAGDANMLGAAKLGVLLGSLATAMLGLAWGAIYARRLRGASATRGTAQAPDSAHS.

A run of 12 helical transmembrane segments spans residues 28–48 (FLHV…IALV), 79–99 (LHFW…GMEI), 115–135 (ALPL…YLAF), 143–163 (AGWA…LALL), 173–193 (IFLL…IAFF), 196–216 (GGLD…VLGL), 219–239 (IGIG…TGLL), 240–260 (MTGA…PVVP), 317–337 (ALHP…NAGV), 356–376 (VAGA…WLLV), 392–412 (IVLI…IAML), and 426–446 (LGVL…GAIY).

Belongs to the NhaA Na(+)/H(+) (TC 2.A.33) antiporter family.

It is found in the cell inner membrane. It catalyses the reaction Na(+)(in) + 2 H(+)(out) = Na(+)(out) + 2 H(+)(in). Its function is as follows. Na(+)/H(+) antiporter that extrudes sodium in exchange for external protons. The polypeptide is Na(+)/H(+) antiporter NhaA (Bordetella petrii (strain ATCC BAA-461 / DSM 12804 / CCUG 43448)).